Consider the following 275-residue polypeptide: Formamidopyrimidine-DNA glycosylase (275 aa).

Residue P2 is the Schiff-base intermediate with DNA of the active site. Residue E3 is the Proton donor of the active site. K58 (proton donor; for beta-elimination activity) is an active-site residue. Residues H93, R111, and R156 each contribute to the DNA site. The segment at 241–275 (FAYDRAGLPCRVCGTPIRQIVQGQRSTYFCPTCQR) adopts an FPG-type zinc-finger fold. R265 acts as the Proton donor; for delta-elimination activity in catalysis.

Belongs to the FPG family. Monomer. Requires Zn(2+) as cofactor.

The enzyme catalyses Hydrolysis of DNA containing ring-opened 7-methylguanine residues, releasing 2,6-diamino-4-hydroxy-5-(N-methyl)formamidopyrimidine.. It carries out the reaction 2'-deoxyribonucleotide-(2'-deoxyribose 5'-phosphate)-2'-deoxyribonucleotide-DNA = a 3'-end 2'-deoxyribonucleotide-(2,3-dehydro-2,3-deoxyribose 5'-phosphate)-DNA + a 5'-end 5'-phospho-2'-deoxyribonucleoside-DNA + H(+). Functionally, involved in base excision repair of DNA damaged by oxidation or by mutagenic agents. Acts as a DNA glycosylase that recognizes and removes damaged bases. Has a preference for oxidized purines, such as 7,8-dihydro-8-oxoguanine (8-oxoG). Has AP (apurinic/apyrimidinic) lyase activity and introduces nicks in the DNA strand. Cleaves the DNA backbone by beta-delta elimination to generate a single-strand break at the site of the removed base with both 3'- and 5'-phosphates. The sequence is that of Formamidopyrimidine-DNA glycosylase from Burkholderia vietnamiensis (strain G4 / LMG 22486) (Burkholderia cepacia (strain R1808)).